The chain runs to 94 residues: Small ribosomal subunit protein uS17 (94 aa).

This sequence belongs to the universal ribosomal protein uS17 family. As to quaternary structure, part of the 30S ribosomal subunit.

One of the primary rRNA binding proteins, it binds specifically to the 5'-end of 16S ribosomal RNA. The sequence is that of Small ribosomal subunit protein uS17 from Deinococcus geothermalis (strain DSM 11300 / CIP 105573 / AG-3a).